The sequence spans 415 residues: Alpha-N-acetylgalactosaminidase (415 aa).

An N-terminal signal peptide occupies residues 1-17 (MLQKTVLLLALVAQVLM). 3 disulfide bridges follow: C38–C80, C42–C49, and C127–C158. Substrate is bound by residues 78 to 79 (DD) and K154. Residue D156 is the Nucleophile of the active site. An N-linked (GlcNAc...) asparagine glycan is attached at N177. A disulfide bond links C187 and C209. Position 188 (S188) interacts with substrate. The N-linked (GlcNAc...) asparagine glycan is linked to N201. The substrate site is built by R213 and D217. D217 functions as the Proton donor in the catalytic mechanism. The residue at position 322 (S322) is a Phosphoserine. N330 carries an N-linked (GlcNAc...) asparagine glycan. At S332 the chain carries Phosphoserine. A glycan (N-linked (GlcNAc...) asparagine) is linked at N385.

It belongs to the glycosyl hydrolase 27 family. In terms of assembly, homodimer.

The protein resides in the lysosome. It carries out the reaction Cleavage of non-reducing alpha-(1-&gt;3)-N-acetylgalactosamine residues from human blood group A and AB mucin glycoproteins, Forssman hapten and blood group A lacto series glycolipids.. The enzyme catalyses a neolactoside IV(3)-alpha-GalNAc,IV(2)-alpha-Fuc-nLc4Cer(d18:1(4E)) + H2O = a neolactoside IV(2)-alpha-Fuc-nLc4Cer(d18:1(4E)) + N-acetyl-alpha-D-galactosamine. It catalyses the reaction a neolactoside IV(3)-alpha-GalNAc,IV(2)-alpha-Fuc-nLc4Cer(d18:0) + H2O = a neolactoside IV(2)-alpha-Fuc-nLc4Cer(d18:0) + N-acetyl-alpha-D-galactosamine. The catalysed reaction is a globoside IV3GalNAc-Gb4Cer + H2O = N-acetyl-alpha-D-galactosamine + a globoside Gb4Cer. Functionally, removes terminal alpha-N-acetylgalactosamine residues from glycolipids and glycopeptides. Required for the breakdown of glycolipids. This Rattus norvegicus (Rat) protein is Alpha-N-acetylgalactosaminidase (Naga).